A 497-amino-acid chain; its full sequence is Probable pyruvate kinase, cytosolic isozyme (497 aa).

A substrate-binding site is contributed by arginine 37. Asparagine 39, serine 41, aspartate 71, and threonine 72 together coordinate K(+). Residue 39 to 42 (NFSH) coordinates ATP. The ATP site is built by arginine 78 and lysine 163. Position 227 (lysine 227) interacts with substrate. Glutamate 229 contacts Mg(2+). Positions 252, 253, and 285 each coordinate substrate. A Mg(2+)-binding site is contributed by aspartate 253.

This sequence belongs to the pyruvate kinase family. As to quaternary structure, homotetramer. It depends on Mg(2+) as a cofactor. Requires K(+) as cofactor.

It localises to the cytoplasm. It is found in the cytosol. The catalysed reaction is pyruvate + ATP = phosphoenolpyruvate + ADP + H(+). Its pathway is carbohydrate degradation; glycolysis; pyruvate from D-glyceraldehyde 3-phosphate: step 5/5. In terms of biological role, key regulatory enzyme of the glycolytic pathway that catalyzes the final step of glycolysis, converting ADP and phosphoenolpyruvate (PEP) to ATP and pyruvate by essentially irreversible transphosphorylation. The chain is Probable pyruvate kinase, cytosolic isozyme from Arabidopsis thaliana (Mouse-ear cress).